We begin with the raw amino-acid sequence, 874 residues long: Protein translocase subunit SecA (874 aa).

ATP-binding positions include Gln85, 103–107 (GEGKT), and Asp492. Over residues 839–854 (EEGPKKPYRREQKIGR) the composition is skewed to basic and acidic residues. Residues 839-864 (EEGPKKPYRREQKIGRNDPCPCGSGK) are disordered. Zn(2+)-binding residues include Cys858, Cys860, Cys869, and Cys870.

The protein belongs to the SecA family. In terms of assembly, monomer and homodimer. Part of the essential Sec protein translocation apparatus which comprises SecA, SecYEG and auxiliary proteins SecDF. Other proteins may also be involved. Zn(2+) is required as a cofactor.

It localises to the cell membrane. The protein localises to the cytoplasm. The enzyme catalyses ATP + H2O + cellular proteinSide 1 = ADP + phosphate + cellular proteinSide 2.. Its function is as follows. Part of the Sec protein translocase complex. Interacts with the SecYEG preprotein conducting channel. Has a central role in coupling the hydrolysis of ATP to the transfer of proteins into and across the cell membrane, serving as an ATP-driven molecular motor driving the stepwise translocation of polypeptide chains across the membrane. The sequence is that of Protein translocase subunit SecA from Carboxydothermus hydrogenoformans (strain ATCC BAA-161 / DSM 6008 / Z-2901).